The primary structure comprises 472 residues: Ras-GEF domain-containing family member 1B (472 aa).

The region spanning 34-164 (HDNNLLSGSL…MIQCLIRKLA (131 aa)) is the N-terminal Ras-GEF domain. The Ras-GEF domain occupies 204–452 (DPYTLAQQLT…YLASYESEGP (249 aa)).

Interacts with CCDC124 during cytokinesis. Interacts with Ras family proteins.

It localises to the early endosome. It is found in the late endosome. Its subcellular location is the midbody. Functionally, guanine nucleotide exchange factor (GEF) with specificity for RAP2A, it doesn't seems to activate other Ras family proteins (in vitro). The chain is Ras-GEF domain-containing family member 1B (RASGEF1B) from Bos taurus (Bovine).